A 519-amino-acid polypeptide reads, in one-letter code: MIPVSLVVVVVGGWTVVYLTDLVLKSSVYFKHSYEDWLENNGLSISPFHIRWQTAVFNRAFYSWGRRKARMLYQWFNFGMVFGVIAMFSSFFLLGKTLMQTLAQMMADSPSSYSSSSSSSSSSSSSSSSSSSSSSSLHNEQVLQVVVPGINLPVNQLTYFFTAVLISGVVHEIGHGIAAIREQVRFNGFGIFLFIIYPGAFVDLFTTHLQLISPVQQLRIFCAGIWHNFVLALLGILALVLLPVILLPFYYTGVGVLITEVAEDSPAIGPRGLFVGDLVTHLQDCPVTNVQDWNECLDTIAYEPQIGYCISASTLQQLSFPVRAYKRLDGSTECCNNHSLTDVCFSYRNNFNKRLHTCLPARKAVEATQVCRTNKDCKKSSSSSFCIIPSLETHTRLIKVKHPPQIDMLYVGHPLHLHYTVSITSFIPRFNFLSIDLPVVVETFVKYLISLSGALAIVNAVPCFALDGQWILNSFLDATLTSVIGDNDVKDLIGFFILLGGSVLLAANVTLGLWMVTAR.

Residues 1 to 3 lie on the Cytoplasmic side of the membrane; that stretch reads MIP. A helical transmembrane segment spans residues 4 to 24; it reads VSLVVVVVGGWTVVYLTDLVL. Residues 25–74 are Lumenal-facing; it reads KSSVYFKHSYEDWLENNGLSISPFHIRWQTAVFNRAFYSWGRRKARMLYQ. 2 helical membrane passes run 75–95 and 96–107; these read WFNFGMVFGVIAMFSSFFLLG and KTLMQTLAQMMA. The Lumenal portion of the chain corresponds to 108-144; sequence DSPSSYSSSSSSSSSSSSSSSSSSSSSSSLHNEQVLQ. Residues 115–135 form a disordered region; the sequence is SSSSSSSSSSSSSSSSSSSSS. A helical transmembrane segment spans residues 145-169; it reads VVVPGINLPVNQLTYFFTAVLISGV. Histidine 171 provides a ligand contact to Zn(2+). The active site involves glutamate 172. 3 consecutive transmembrane segments (helical) span residues 174-186, 187-209, and 229-251; these read GHGIAAIREQVRF, NGFGIFLFIIYPGAFVDLFTTHL, and FVLALLGILALVLLPVILLPFYY. Zn(2+) is bound at residue histidine 175. Topologically, residues 252–446 are lumenal; the sequence is TGVGVLITEV…LPVVVETFVK (195 aa). An N-linked (GlcNAc...) asparagine glycan is attached at asparagine 337. A run of 2 helical transmembrane segments spans residues 447 to 464 and 465 to 476; these read YLISLSGALAIVNAVPCF and ALDGQWILNSFL. The Lumenal portion of the chain corresponds to 477–492; the sequence is DATLTSVIGDNDVKDL. Residues 493–513 traverse the membrane as a helical segment; that stretch reads IGFFILLGGSVLLAANVTLGL. Over 514–519 the chain is Cytoplasmic; that stretch reads WMVTAR.

This sequence belongs to the peptidase M50A family. It depends on Zn(2+) as a cofactor. As to expression, expressed in heart, brain, placenta, lung, liver, muscle, kidney and pancreas.

The protein resides in the membrane. Its subcellular location is the cytoplasm. The protein localises to the golgi apparatus membrane. It catalyses the reaction Cleaves several transcription factors that are type-2 transmembrane proteins within membrane-spanning domains. Known substrates include sterol regulatory element-binding protein (SREBP) -1, SREBP-2 and forms of the transcriptional activator ATF6. SREBP-2 is cleaved at the site 477-DRSRILL-|-CVLTFLCLSFNPLTSLLQWGGA-505. The residues Asn-Pro, 11 residues distal to the site of cleavage in the membrane-spanning domain, are important for cleavage by S2P endopeptidase. Replacement of either of these residues does not prevent cleavage, but there is no cleavage if both of these residues are replaced.. In terms of biological role, zinc metalloprotease that mediates intramembrane proteolysis of proteins such as ATF6, ATF6B, SREBF1/SREBP1 and SREBF2/SREBP2. Catalyzes the second step in the proteolytic activation of the sterol regulatory element-binding proteins (SREBPs) SREBF1/SREBP1 and SREBF2/SREBP2: cleaves SREBPs within the first transmembrane segment, thereby releasing the N-terminal segment with a portion of the transmembrane segment attached. Mature N-terminal SREBP fragments shuttle to the nucleus and activate gene transcription. Also mediates the second step in the proteolytic activation of the cyclic AMP-dependent transcription factor ATF-6 (ATF6 and ATF6B). Involved in intramembrane proteolysis during bone formation. In astrocytes and osteoblasts, upon DNA damage and ER stress, mediates the second step of the regulated intramembrane proteolytic activation of the transcription factor CREB3L1, leading to the inhibition of cell-cycle progression. The protein is Membrane-bound transcription factor site-2 protease of Homo sapiens (Human).